Here is a 379-residue protein sequence, read N- to C-terminus: UDP-4-amino-4-deoxy-L-arabinose--oxoglutarate aminotransferase (379 aa).

N6-(pyridoxal phosphate)lysine is present on K182.

Belongs to the DegT/DnrJ/EryC1 family. ArnB subfamily. In terms of assembly, homodimer. Pyridoxal 5'-phosphate is required as a cofactor.

It carries out the reaction UDP-4-amino-4-deoxy-beta-L-arabinose + 2-oxoglutarate = UDP-beta-L-threo-pentopyranos-4-ulose + L-glutamate. It functions in the pathway nucleotide-sugar biosynthesis; UDP-4-deoxy-4-formamido-beta-L-arabinose biosynthesis; UDP-4-deoxy-4-formamido-beta-L-arabinose from UDP-alpha-D-glucuronate: step 2/3. The protein operates within bacterial outer membrane biogenesis; lipopolysaccharide biosynthesis. Catalyzes the conversion of UDP-4-keto-arabinose (UDP-Ara4O) to UDP-4-amino-4-deoxy-L-arabinose (UDP-L-Ara4N). The modified arabinose is attached to lipid A and is required for resistance to polymyxin and cationic antimicrobial peptides. In Escherichia coli O81 (strain ED1a), this protein is UDP-4-amino-4-deoxy-L-arabinose--oxoglutarate aminotransferase.